Reading from the N-terminus, the 290-residue chain is MSVCSSSSSSQKTWIVNGILAGTAIAAAIGARAYLGRSKKFRSRVVGIIPARYASSRFEGKPLVQILGKPMIQRTWERSKLATTLDHIVVATDDERIAECCRGFGADVIMTSESCRNGTERCNEALEKLEKKYDVVVNIQGDEPLIEPEIIDGVVKALQVTPDAVFSTAVTSLKPEDGLDPNRVKCVVDNRGYAIYFSRGLIPYNKSGKVNPDFPYMLHLGIQSFDSKFLKVYSELQPTPLQQEEDLEQLKVLENGYKMKVIKVDHEAHGVDTPDDVEKIESLMRERNMS.

The N-terminal 50 residues, 1–50 (MSVCSSSSSSQKTWIVNGILAGTAIAAAIGARAYLGRSKKFRSRVVGIIP), are a transit peptide targeting the mitochondrion.

The protein belongs to the KdsB family. The cofactor is Mg(2+). In terms of tissue distribution, expressed in roots, leaves, stems and siliques.

It is found in the mitochondrion outer membrane. It carries out the reaction 3-deoxy-alpha-D-manno-oct-2-ulosonate + CTP = CMP-3-deoxy-beta-D-manno-octulosonate + diphosphate. It functions in the pathway nucleotide-sugar biosynthesis; CMP-3-deoxy-D-manno-octulosonate biosynthesis; CMP-3-deoxy-D-manno-octulosonate from 3-deoxy-D-manno-octulosonate and CTP: step 1/1. With respect to regulation, inhibited by 2beta-deoxy-Kdo. Catalyzes the production of the sugar nucleotide CMP-3-deoxy-D-manno-octulosonate (CMP-KDO). CTP is the preferred nucleotide donor, but it can partially be replaced with UTP. Activates KDO during the biosynthesis of rhamnogalacturonan II (RG-II), a structurally complex pectic polysaccharide of the primary cell wall. RG-II is essential for the cell wall integrity of rapidly growing tissues and pollen tube growth and elongation. The chain is 3-deoxy-manno-octulosonate cytidylyltransferase, mitochondrial from Arabidopsis thaliana (Mouse-ear cress).